We begin with the raw amino-acid sequence, 198 residues long: Translation initiation factor IF-3 (198 aa).

The segment at 168-198 is disordered; the sequence is SLAPKKAGSPKKAETDTAKKENPKKAVETKE. Over residues 178–198 the composition is skewed to basic and acidic residues; the sequence is KKAETDTAKKENPKKAVETKE.

Belongs to the IF-3 family. In terms of assembly, monomer.

It localises to the cytoplasm. IF-3 binds to the 30S ribosomal subunit and shifts the equilibrium between 70S ribosomes and their 50S and 30S subunits in favor of the free subunits, thus enhancing the availability of 30S subunits on which protein synthesis initiation begins. In Phocaeicola vulgatus (strain ATCC 8482 / DSM 1447 / JCM 5826 / CCUG 4940 / NBRC 14291 / NCTC 11154) (Bacteroides vulgatus), this protein is Translation initiation factor IF-3.